Reading from the N-terminus, the 371-residue chain is Carbamoyl phosphate synthase small chain (371 aa).

The tract at residues 1-182 is CPSase; it reads MGVHKKGYLV…KNPIVHTPKN (182 aa). L-glutamine-binding residues include serine 49, glycine 235, and glycine 237. One can recognise a Glutamine amidotransferase type-1 domain in the interval 186–371; that stretch reads RVVVLDLGVK…EFVKILEGRK (186 aa). Cysteine 263 acts as the Nucleophile in catalysis. 5 residues coordinate L-glutamine: leucine 264, glutamine 267, asparagine 305, glycine 307, and tyrosine 308. Active-site residues include histidine 346 and glutamate 348.

This sequence belongs to the CarA family. In terms of assembly, composed of two chains; the small (or glutamine) chain promotes the hydrolysis of glutamine to ammonia, which is used by the large (or ammonia) chain to synthesize carbamoyl phosphate. Tetramer of heterodimers (alpha,beta)4.

The catalysed reaction is hydrogencarbonate + L-glutamine + 2 ATP + H2O = carbamoyl phosphate + L-glutamate + 2 ADP + phosphate + 2 H(+). The enzyme catalyses L-glutamine + H2O = L-glutamate + NH4(+). It functions in the pathway amino-acid biosynthesis; L-arginine biosynthesis; carbamoyl phosphate from bicarbonate: step 1/1. The protein operates within pyrimidine metabolism; UMP biosynthesis via de novo pathway; (S)-dihydroorotate from bicarbonate: step 1/3. Functionally, small subunit of the glutamine-dependent carbamoyl phosphate synthetase (CPSase). CPSase catalyzes the formation of carbamoyl phosphate from the ammonia moiety of glutamine, carbonate, and phosphate donated by ATP, constituting the first step of 2 biosynthetic pathways, one leading to arginine and/or urea and the other to pyrimidine nucleotides. The small subunit (glutamine amidotransferase) binds and cleaves glutamine to supply the large subunit with the substrate ammonia. The sequence is that of Carbamoyl phosphate synthase small chain from Pyrococcus furiosus (strain ATCC 43587 / DSM 3638 / JCM 8422 / Vc1).